The sequence spans 350 residues: UDP-rhamnose/UDP-galactose transporter 3 (350 aa).

10 consecutive transmembrane segments (helical) span residues 12-32 (AVSD…IIMA), 41-61 (GFAF…TALV), 81-101 (LIWF…SLML), 104-124 (VGFY…MEWI), 133-153 (EVKI…VTDV), 160-180 (FICA…IGSL), 200-220 (AFSL…KFIM), 224-244 (MSSG…FCNI), 257-277 (SFQV…WLLF), and 286-306 (VAGM…MELE).

Belongs to the TPT transporter family. TPT (TC 2.A.7.9) subfamily.

The protein localises to the golgi apparatus membrane. In terms of biological role, nucleotide-sugar transporter that transports UDP-rhamnose or UDP-galactose and UMP in a strict counter-exchange mode. This chain is UDP-rhamnose/UDP-galactose transporter 3, found in Arabidopsis thaliana (Mouse-ear cress).